A 484-amino-acid polypeptide reads, in one-letter code: 60S ribosome subunit biogenesis protein NOP8 (484 aa).

An RRM domain is found at 7-83 (KRIFVGNIFH…NILKVDEAKP (77 aa)). Phosphoserine occurs at positions 234, 239, and 268. Residues 260–330 (DKPMTLNDSD…EGDGQEDNEF (71 aa)) form a disordered region. Residues 320–329 (DEGDGQEDNE) show a composition bias toward acidic residues. A Phosphoserine modification is found at Ser-370.

As to quaternary structure, interacts with NIP7 and RRP43. Together with DBP6, URB1, URB2 and RSA3, forms an RNA-independent complex, which is required during early maturation of nascent 60S ribosomal subunits.

It localises to the nucleus. It is found in the nucleolus. In terms of biological role, required for 60S ribosomal subunit synthesis. May be involved in assembly reactions occurring within late pre-ribosomal particles. This is 60S ribosome subunit biogenesis protein NOP8 (NOP8) from Saccharomyces cerevisiae (strain ATCC 204508 / S288c) (Baker's yeast).